Here is a 412-residue protein sequence, read N- to C-terminus: Docking protein 2 (412 aa).

The region spanning 4–114 (GAVKQGFLYL…WVQAICLLAF (111 aa)) is the PH domain. The IRS-type PTB domain maps to 147–252 (PHKEFAVTMR…SAQKNAAPAT (106 aa)). Positions 246-296 (KNAAPATPQPQPATIPASLPRPDSPYSRPHDSLPPPSPTTPVPAPRPRGQE) are disordered. The residue at position 271 (Y271) is a Phosphotyrosine. Over residues 277–291 (SLPPPSPTTPVPAPR) the composition is skewed to pro residues. Y299 and Y345 each carry phosphotyrosine. Positions 359–412 (SPQEPRGEAWRRQATADRDPAGLQHVQPAGQDFSASGWQPGTEYDNVVLKKGPK) are disordered. The span at 361 to 378 (QEPRGEAWRRQATADRDP) shows a compositional bias: basic and acidic residues.

The protein belongs to the DOK family. Type A subfamily. In terms of assembly, interacts with phosphorylated RASGAP and EGFR. Interacts with RET and NCK. Interacts (via PH domain) with TEK/TIE2 (tyrosine phosphorylated). As to quaternary structure, (Microbial infection) Interacts with Herpes simplex virus 1 (HHV-1) protein UL46; this interaction induces DOK2 phosphorylation and subsequent degradation. In terms of processing, on immunoreceptor stimulation, phosphorylated on C-terminal tyrosine residues. Phosphorylation on Tyr-345 is required for binding to the SH2 domain of NCK. Phosphorylation on both Tyr-271 and Tyr-299 is required for interaction with RASGAP. Phosphorylated on tyrosine residues by TEK/TIE2. Highly expressed in peripheral blood leukocytes, lymph nodes and spleen. Lower expression in thymus, bone marrow and fetal liver.

Its function is as follows. DOK proteins are enzymatically inert adaptor or scaffolding proteins. They provide a docking platform for the assembly of multimolecular signaling complexes. DOK2 may modulate the cellular proliferation induced by IL-4, as well as IL-2 and IL-3. May be involved in modulating Bcr-Abl signaling. Attenuates EGF-stimulated MAP kinase activation. The chain is Docking protein 2 (DOK2) from Homo sapiens (Human).